The following is a 65-amino-acid chain: UPF0434 protein HSM_0997 (65 aa).

It belongs to the UPF0434 family.

In Histophilus somni (strain 2336) (Haemophilus somnus), this protein is UPF0434 protein HSM_0997.